Here is a 479-residue protein sequence, read N- to C-terminus: MNRNPDQNTLPNITLKIIETYLGRIPSVNEYHMLKLQARNIQKITVFNKDIFVSLVKKNKKRFFSDVDTSASEIKDRILSYFSKQTQTYNIGKLFTIIELQSVLVTTYTDILGVLTIKAPNVISSKISYNVTSMEELARDMLNSMNVAVIDKAKVMGRHNVSSLVKNVNKLMEEYLRRHNKSCICYGSYSLYLINPNIRYGDIDILQTNSRTFLIDLAFLIKFITGNNIILSKIPYLRNYMVIKDENDNHIIDSFNIRQDTMNVVPKIFIDNIYIVDPTFQLLNMIKMFSQIDRLEDLSKDPEKFNARMATMLEYVRYTHGIVFDGTRNNMPMKCIIDENNRIVTVTTKDYFSFKKCLVYLDENVLSSDILDLNADTSCDFESVTNSVYLIHDNIMYTYFSNTILLSDKGKVHEISARGLCAHILLYQMLTSGEYKQCLSDLLNSMMNRDKIPIYSHTERDKKPGRHGFINIEKDIIVF.

Residues Asp202 and Asp204 contribute to the active site. Ca(2+)-binding residues include Asp202, Asp204, and Asp253.

It belongs to the poxviridae poly(A) polymerase catalytic subunit family. Heterodimer of a large (catalytic) subunit and a small (regulatory) subunit.

The catalysed reaction is RNA(n) + ATP = RNA(n)-3'-adenine ribonucleotide + diphosphate. In terms of biological role, polymerase that creates the 3'-poly(A) tail of mRNA's. The polypeptide is Poly(A) polymerase catalytic subunit (OPG063) (Bos taurus (Bovine)).